A 54-amino-acid polypeptide reads, in one-letter code: Ovomucoid (54 aa).

The Kazal-like domain maps to 4–54 (VNCSDYPKPVCSLLYMPLCGSDNKTYGNKCNFCNAVADSNGTLTLSHFGKC). Cystine bridges form between Cys-6/Cys-36, Cys-14/Cys-33, and Cys-22/Cys-54. Asn-43 carries N-linked (GlcNAc...) asparagine glycosylation.

The protein localises to the secreted. In Geococcyx californianus (Greater roadrunner), this protein is Ovomucoid.